Reading from the N-terminus, the 270-residue chain is UPF0354 protein BT9727_4425 (270 aa).

It belongs to the UPF0354 family.

This is UPF0354 protein BT9727_4425 from Bacillus thuringiensis subsp. konkukian (strain 97-27).